A 169-amino-acid chain; its full sequence is Superoxide dismutase [Cu-Zn] 1 (169 aa).

The N-terminal stretch at 1–18 (MFEQWDALCAVLFSFSIA) is a signal peptide. Residues H65, H67, and H83 each coordinate Cu cation. An intrachain disulfide couples C72 to C165. H83, H91, H100, and D103 together coordinate Zn(2+). H145 is a Cu cation binding site.

It belongs to the Cu-Zn superoxide dismutase family. It depends on Cu cation as a cofactor. Requires Zn(2+) as cofactor.

The catalysed reaction is 2 superoxide + 2 H(+) = H2O2 + O2. Destroys radicals which are normally produced within the cells and which are toxic to biological systems. The protein is Superoxide dismutase [Cu-Zn] 1 (sodC1) of Aquifex aeolicus (strain VF5).